The primary structure comprises 1113 residues: Histone deacetylase 5 (1113 aa).

The tract at residues 1–22 is disordered; that stretch reads MNSPNESDGMSGREPSLGILPR. Lys-35 participates in a covalent cross-link: Glycyl lysine isopeptide (Lys-Gly) (interchain with G-Cter in SUMO2). 2 disordered regions span residues 39 to 63 and 187 to 272; these read PGAM…RGAL and KEPT…SSPL. Residues 238-249 are compositionally biased toward basic and acidic residues; the sequence is DSRDDFPLRKTA. Ser-250 bears the Phosphoserine; by AMPK, CaMK1, SIK1 and PKD/PRKD1 mark. The span at 263 to 272 shows a compositional bias: basic and acidic residues; that stretch reads KVAERRSSPL. Thr-283 bears the Phosphothreonine; by PKC mark. Residues 472–494 are disordered; the sequence is RTVGKLPRHRPLSRTQSSPLPQS. Low complexity predominate over residues 484-494; it reads SRTQSSPLPQS. A Phosphoserine; by AMPK, CaMK1, SIK1 and PKD/PRKD1 modification is found at Ser-488. Residue Lys-523 is modified to N6-acetyllysine. Positions 526-611 are disordered; sequence TKTGELSRQP…PDEGPDLEES (86 aa). Positions 571–610 are enriched in acidic residues; it reads STQEDLEEEEEEEEEEEEDCIQVKDEDGESGPDEGPDLEE. A phosphoserine mark is found at Ser-600 and Ser-650. Residues 675 to 1019 are histone deacetylase; that stretch reads GVVYDTFMLK…VSALLSVELQ (345 aa). Zn(2+)-binding residues include Cys-687, Cys-689, His-695, and Cys-772. Residue His-824 is part of the active site. A Nuclear export signal motif is present at residues 1072-1113; it reads EEAETVSAMALLSVGAEQAQAVATQEHSPRPAEEPMEQEPAL. Residues 1088–1113 are disordered; sequence EQAQAVATQEHSPRPAEEPMEQEPAL. Ser-1099 carries the post-translational modification Phosphoserine.

This sequence belongs to the histone deacetylase family. HD type 2 subfamily. As to quaternary structure, interacts with AHRR, BAHD1, BCOR, HDAC7, HDAC9, CTBP1, MEF2C, NCOR2, NRIP1, PHB2 and a 14-3-3 chaperone protein. Interacts with BCL6, DDIT3/CHOP, GRK5, KDM5B and MYOCD. Interacts with EP300 in the presence of TFAP2C. Interacts with ANKRA2. Interacts with CUL7 (as part of the 3M complex); negatively regulated by ANKRA2. Interacts with ZBTB7B; the interaction allows the recruitment of HDAC4 on CD8 loci for deacetylation and possible inhibition of CD8 genes expression. Interacts with RARA. Phosphorylated by AMPK, CaMK1, SIK1 and PRKD1 at Ser-250 and Ser-488. The phosphorylation is required for the export to the cytoplasm and inhibition. Phosphorylated by the PKC kinases PKN1 and PKN2, impairing nuclear import. Phosphorylated by GRK5, leading to nuclear export of HDAC5 and allowing MEF2-mediated transcription. Post-translationally, ubiquitinated. Polyubiquitination however does not lead to its degradation.

It localises to the nucleus. It is found in the cytoplasm. It carries out the reaction N(6)-acetyl-L-lysyl-[histone] + H2O = L-lysyl-[histone] + acetate. Its function is as follows. Responsible for the deacetylation of lysine residues on the N-terminal part of the core histones (H2A, H2B, H3 and H4). Histone deacetylation gives a tag for epigenetic repression and plays an important role in transcriptional regulation, cell cycle progression and developmental events. Histone deacetylases act via the formation of large multiprotein complexes. Involved in muscle maturation by repressing transcription of myocyte enhancer MEF2C. During muscle differentiation, it shuttles into the cytoplasm, allowing the expression of myocyte enhancer factors. Serves as a corepressor of RARA and causes its deacetylation. In association with RARA, plays a role in the repression of microRNA-10a and thereby in the inflammatory response. The sequence is that of Histone deacetylase 5 (Hdac5) from Mus musculus (Mouse).